The following is a 371-amino-acid chain: Deoxyhypusine synthase (371 aa).

NAD(+)-binding positions include 107–111 (SNLIS), 133–135 (TTG), Glu139, and Asp240. 138–139 (EE) contacts spermidine. Asp245 serves as a coordination point for spermidine. Residue Gly287 participates in NAD(+) binding. Position 292 (His292) interacts with spermidine. NAD(+) is bound at residue 312–313 (TA). Residues 318–320 (GSD) and 327–333 (EAVSWGK) contribute to the spermidine site. Catalysis depends on Lys333, which acts as the Nucleophile. Position 346–347 (346–347 (DA)) interacts with NAD(+).

Belongs to the deoxyhypusine synthase family. NAD(+) is required as a cofactor. In terms of tissue distribution, expressed in shoot tips.

The enzyme catalyses [eIF5A protein]-L-lysine + spermidine = [eIF5A protein]-deoxyhypusine + propane-1,3-diamine. Its pathway is protein modification; eIF5A hypusination. Catalyzes the NAD-dependent oxidative cleavage of spermidine and the subsequent transfer of the butylamine moiety of spermidine to the epsilon-amino group of a specific lysine residue of the eIF-5A precursor protein to form the intermediate deoxyhypusine residue. Also able to produce homospermidine from putrescine. The protein is Deoxyhypusine synthase (DHS1) of Senecio vernalis (Spring groundsel).